Consider the following 370-residue polypeptide: Propane 2-monooxygenase, reductase component (370 aa).

The segment covering 1-14 (MAPRPLRRHPPLHH) has biased composition (basic residues). Positions 1-21 (MAPRPLRRHPPLHHSFHESRR) are disordered. Residues 28–118 (HRINFEPVDI…DCTIELLNFD (91 aa)) form the 2Fe-2S ferredoxin-type domain. [2Fe-2S] cluster contacts are provided by cysteine 62, cysteine 67, cysteine 70, and cysteine 102. Positions 128 to 229 (IQDVRTRVTR…TGPYGSFTIK (102 aa)) constitute an FAD-binding FR-type domain.

It belongs to the TmoA/XamoA family. As to quaternary structure, the propane 2-monooxygenase multicomponent enzyme system is composed of an electron transfer component and a monooxygenase component interacting with the effector protein PrmD. The electron transfer component is composed of a reductase (PrmB), and the monooxygenase component is formed by a large subunit (PrmA) and a small subunit (PrmC). The cofactor is FAD. [2Fe-2S] cluster is required as a cofactor.

Its function is as follows. Reductase component of the propane 2-monooxygenase multicomponent enzyme system which is involved in the degradation of propane via the O2-dependent hydroxylation of propane. Reductase catalyzes the transfer of electrons from NADH or NADPH to monooxygenase. The chain is Propane 2-monooxygenase, reductase component from Rhodococcus jostii (strain RHA1).